A 544-amino-acid chain; its full sequence is Chaperonin GroEL 1 (544 aa).

Residues 29–32 (TLGP), 86–90 (DGTTT), Gly-413, and Asp-495 contribute to the ATP site.

It belongs to the chaperonin (HSP60) family. Forms a cylinder of 14 subunits composed of two heptameric rings stacked back-to-back. Interacts with the co-chaperonin GroES.

It localises to the cytoplasm. It catalyses the reaction ATP + H2O + a folded polypeptide = ADP + phosphate + an unfolded polypeptide.. Its function is as follows. Together with its co-chaperonin GroES, plays an essential role in assisting protein folding. The GroEL-GroES system forms a nano-cage that allows encapsulation of the non-native substrate proteins and provides a physical environment optimized to promote and accelerate protein folding. This Synechococcus sp. (strain ATCC 27144 / PCC 6301 / SAUG 1402/1) (Anacystis nidulans) protein is Chaperonin GroEL 1.